The sequence spans 527 residues: MNSVDLTADLQALLTCPNVRHNLSAAQLTEKVLSRNEGILTSTGAVRATTGAYTGRSPKDKFIVEEESTKNKIDWGPVNQPISEEAFERLYTKVVSYLKERDELFVFEGFAGADEKYRLPITVVNEFAWHNLFARQLFIRPEGNDKKTVEQPFTILSAPHFKADPKTDGTHSETFIIVSFEKRTILIGGTEYAGEMKKSIFSIMNFLLPERDILSMHCSANVGEKGDVALFFGLSGTGKTTLSADADRKLIGDDEHGWSDTGVFNIEGGCYAKCIHLSEEKEPQIFNAIRFGSVLENVVVDEDTREANYDDSFYTENTRAAYPIHMINNIVTPSMAGHPSAIVFLTADAFGVLPPISKLTKEQAMYHFLSGYTSKLAGTERGVTSPETTFSTCFGSPFLPLPAHVYAEMLGKKIDEHGADVFLVNTGWTGGGYGTGERMKLSYTRAMVKAAIEGKLEDAEMITDDIFGLHIPAHVPGVPDHILQPENTWTNKEEYKEKAVYLANEFKENFKKFAHTDAIAQAGGPLV.

Substrate contacts are provided by Arg-56, Tyr-192, and Lys-198. ATP-binding positions include Lys-198, His-217, and 233–241 (GLSGTGKTT). Residues Lys-198 and His-217 each coordinate Mn(2+). Position 254 (Asp-254) interacts with Mn(2+). Residues Glu-282, Arg-319, and Thr-444 each contribute to the ATP site. Arg-319 is a substrate binding site.

Belongs to the phosphoenolpyruvate carboxykinase (ATP) family. The cofactor is Mn(2+).

The protein localises to the cytoplasm. The enzyme catalyses oxaloacetate + ATP = phosphoenolpyruvate + ADP + CO2. Its pathway is carbohydrate biosynthesis; gluconeogenesis. In terms of biological role, involved in the gluconeogenesis. Catalyzes the conversion of oxaloacetate (OAA) to phosphoenolpyruvate (PEP) through direct phosphoryl transfer between the nucleoside triphosphate and OAA. The sequence is that of Phosphoenolpyruvate carboxykinase (ATP) from Bacillus subtilis (strain 168).